We begin with the raw amino-acid sequence, 248 residues long: Small ribosomal subunit protein uS2c (248 aa).

Belongs to the universal ribosomal protein uS2 family.

Its subcellular location is the plastid. The protein localises to the chloroplast. This is Small ribosomal subunit protein uS2c (rps2) from Trachelium caeruleum (Blue throatwort).